Here is a 749-residue protein sequence, read N- to C-terminus: Disintegrin and metalloproteinase domain-containing protein 10 (749 aa).

The N-terminal stretch at Met-1–Gly-18 is a signal peptide. Positions Gly-19 to Arg-214 are excised as a propeptide. Residues Gly-171–Val-178 carry the Cysteine switch motif. Residue Cys-173 coordinates Zn(2+). The Extracellular segment spans residues Thr-215–Glu-673. The region spanning Asn-221 to Gly-457 is the Peptidase M12B domain. 17 disulfides stabilise this stretch: Cys-223–Cys-314, Cys-345–Cys-452, Cys-400–Cys-436, Cys-461–Cys-496, Cys-472–Cys-485, Cys-474–Cys-480, Cys-484–Cys-516, Cys-504–Cys-512, Cys-511–Cys-537, Cys-525–Cys-544, Cys-531–Cys-563, Cys-556–Cys-568, Cys-573–Cys-599, Cys-581–Cys-608, Cys-583–Cys-598, Cys-595–Cys-640, and Cys-633–Cys-646. 2 N-linked (GlcNAc...) asparagine glycosylation sites follow: Asn-268 and Asn-279. His-384 lines the Zn(2+) pocket. Glu-385 is an active-site residue. Positions 388 and 394 each coordinate Zn(2+). N-linked (GlcNAc...) asparagine glycosylation occurs at Asn-440. Positions Gln-458–Asn-552 constitute a Disintegrin domain. Asn-552 is a glycosylation site (N-linked (GlcNAc...) asparagine). The chain crosses the membrane as a helical span at residues Trp-674–Ile-697. Residues Lys-698 to Arg-749 are Cytoplasmic-facing. Positions Pro-705–Arg-749 are disordered. Positions Pro-709–Pro-716 match the SH3-binding motif. At Thr-720 the chain carries Phosphothreonine. Positions Arg-723–Pro-729 match the SH3-binding motif. Positions Arg-735 to Arg-749 are interaction with AP2A1, AP2A2 and AP2M1.

As to quaternary structure, forms a ternary EFNA5-EPHA3-ADAM10 complex mediating EFNA5 extracellular domain shedding by ADAM10 which regulates the EFNA5-EPHA3 complex internalization and function, the cleavage occurs in trans, with ADAM10 and its substrate being on the membranes of opposing cells. Interacts with the clathrin adapter AP2 complex subunits AP2A1, AP2A2, AP2B1, and AP2M1; this interaction facilitates ADAM10 endocytosis from the plasma membrane during long-term potentiation in hippocampal neurons. Forms a ternary complex composed of ADAM10, EPHA4 and CADH1; within the complex, ADAM10 cleaves CADH1 which disrupts adherens junctions. Interacts with EPHA2. Interacts with NGF in a divalent cation-dependent manner. Interacts with TSPAN14; the interaction promotes ADAM10 maturation and cell surface expression. Interacts with TSPAN5, TSPAN10, TSPAN14, TSPAN15, TSPAN17 and TSPAN33; these interactions regulate ADAM10 substrate specificity, endocytosis and turnover. Interacts (via extracellular domain) with TSPAN33 (via extracellular domain) and (via cytoplasmic domain) with AFDN; interaction with TSPAN33 allows the docking of ADAM10 to zonula adherens through a PDZ11-dependent interaction between TSPAN33 and PLEKHA7 while interaction with AFDN locks ADAM10 at zonula adherens. Interacts with DLG1; this interaction recruits ADAM10 to the cell membrane during long-term depression in hippocampal neurons. Interacts (via extracellular domain) with BACE1 (via extracellular domain). Interacts with FAM171A1. It depends on Zn(2+) as a cofactor. The precursor is cleaved by furin and PCSK7. As to expression, expressed in brain, kidney, lung, spleen, ovary and testis.

The protein localises to the cell membrane. Its subcellular location is the golgi apparatus membrane. The protein resides in the cytoplasmic vesicle. It localises to the clathrin-coated vesicle. It is found in the cell projection. The protein localises to the axon. Its subcellular location is the dendrite. The protein resides in the cell junction. It localises to the adherens junction. It is found in the cytoplasm. It catalyses the reaction Endopeptidase of broad specificity.. Its activity is regulated as follows. Catalytically inactive when the propeptide is intact and associated with the mature enzyme. The disintegrin and cysteine-rich regions modulate access of substrates to exerts an inhibitory effect on the cleavage of ADAM10 substrates. Functionally, transmembrane metalloprotease which mediates the ectodomain shedding of a myriad of transmembrane proteins, including adhesion proteins, growth factor precursors and cytokines being essential for development and tissue homeostasis. Associates with six members of the tetraspanin superfamily TspanC8 which regulate its exit from the endoplasmic reticulum and its substrate selectivity. Cleaves the membrane-bound precursor of TNF-alpha at '76-Ala-|-Val-77' to its mature soluble form. Responsible for the proteolytical release of soluble JAM3 from endothelial cells surface. Responsible for the proteolytic release of several other cell-surface proteins, including heparin-binding epidermal growth-like factor, ephrin-A2, CD44, CDH2 and for constitutive and regulated alpha-secretase cleavage of amyloid precursor protein (APP). Contributes to the normal cleavage of the cellular prion protein. Involved in the cleavage of the adhesion molecule L1 at the cell surface and in released membrane vesicles, suggesting a vesicle-based protease activity. Also controls the proteolytic processing of Notch and mediates lateral inhibition during neurogenesis. Required for the development of type 1 transitional B cells into marginal zone B cells, probably by cleaving Notch. Responsible for the FasL ectodomain shedding and for the generation of the remnant ADAM10-processed FasL (FasL APL) transmembrane form. Also cleaves the ectodomain of the integral membrane proteins CORIN and ITM2B. Mediates the proteolytic cleavage of LAG3, leading to release the secreted form of LAG3. Mediates the proteolytic cleavage of IL6R and IL11RA, leading to the release of secreted forms of IL6R and IL11RA. Enhances the cleavage of CHL1 by BACE1. Cleaves NRCAM. Cleaves TREM2, resulting in shedding of the TREM2 ectodomain. Involved in the development and maturation of glomerular and coronary vasculature. During development of the cochlear organ of Corti, promotes pillar cell separation by forming a ternary complex with CADH1 and EPHA4 and cleaving CADH1 at adherens junctions. May regulate the EFNA5-EPHA3 signaling. Regulates leukocyte transmigration as a sheddase for the adherens junction protein VE-cadherin/CDH5 in endothelial cells. The sequence is that of Disintegrin and metalloproteinase domain-containing protein 10 (Adam10) from Rattus norvegicus (Rat).